A 111-amino-acid polypeptide reads, in one-letter code: MLCSLLALLLGTFFGVRSQTIHQWPATLVQPVGSPLSLECTVEGTSNPNLYWYRQAAGRGLQLLFYSVGIGQISSEVPQNLSASRPQDRQFILSSKKLLLSDSGFYLCAWS.

Residues 1–18 form the signal peptide; it reads MLCSLLALLLGTFFGVRS. One can recognise an Ig-like domain in the interval 19–111; sequence QTIHQWPATL…DSGFYLCAWS (93 aa). A disulfide bond links Cys-40 and Cys-108. A glycan (N-linked (GlcNAc...) asparagine) is linked at Asn-80.

Alpha-beta TR is a heterodimer composed of an alpha and beta chain; disulfide-linked. The alpha-beta TR is associated with the transmembrane signaling CD3 coreceptor proteins to form the TR-CD3 (TcR or TCR). The assembly of alpha-beta TR heterodimers with CD3 occurs in the endoplasmic reticulum where a single alpha-beta TR heterodimer associates with one CD3D-CD3E heterodimer, one CD3G-CD3E heterodimer and one CD247 homodimer forming a stable octameric structure. CD3D-CD3E and CD3G-CD3E heterodimers preferentially associate with TR alpha and TR beta chains, respectively. The association of the CD247 homodimer is the last step of TcR assembly in the endoplasmic reticulum and is required for transport to the cell surface.

Its subcellular location is the cell membrane. Functionally, v region of the variable domain of T cell receptor (TR) beta chain that participates in the antigen recognition. Alpha-beta T cell receptors are antigen specific receptors which are essential to the immune response and are present on the cell surface of T lymphocytes. Recognize peptide-major histocompatibility (MH) (pMH) complexes that are displayed by antigen presenting cells (APC), a prerequisite for efficient T cell adaptive immunity against pathogens. Binding of alpha-beta TR to pMH complex initiates TR-CD3 clustering on the cell surface and intracellular activation of LCK that phosphorylates the ITAM motifs of CD3G, CD3D, CD3E and CD247 enabling the recruitment of ZAP70. In turn ZAP70 phosphorylates LAT, which recruits numerous signaling molecules to form the LAT signalosome. The LAT signalosome propagates signal branching to three major signaling pathways, the calcium, the mitogen-activated protein kinase (MAPK) kinase and the nuclear factor NF-kappa-B (NF-kB) pathways, leading to the mobilization of transcription factors that are critical for gene expression and essential for T cell growth and differentiation. The T cell repertoire is generated in the thymus, by V-(D)-J rearrangement. This repertoire is then shaped by intrathymic selection events to generate a peripheral T cell pool of self-MH restricted, non-autoaggressive T cells. Post-thymic interaction of alpha-beta TR with the pMH complexes shapes TR structural and functional avidity. The protein is T cell receptor beta variable 30 of Homo sapiens (Human).